Reading from the N-terminus, the 454-residue chain is tRNA modification GTPase MnmE (454 aa).

Residues Arg23, Glu80, and Lys120 each coordinate (6S)-5-formyl-5,6,7,8-tetrahydrofolate. Residues 216–377 (GMKVVIAGRP…LRNHLKQSMG (162 aa)) form the TrmE-type G domain. Asn226 is a K(+) binding site. GTP is bound by residues 226–231 (NAGKSS), 245–251 (TDIAGTT), 270–273 (DTAG), 335–338 (NKAD), and 358–360 (SAR). Ser230 contributes to the Mg(2+) binding site. Residues Thr245, Ile247, and Thr250 each contribute to the K(+) site. Thr251 serves as a coordination point for Mg(2+). Lys454 is a (6S)-5-formyl-5,6,7,8-tetrahydrofolate binding site.

It belongs to the TRAFAC class TrmE-Era-EngA-EngB-Septin-like GTPase superfamily. TrmE GTPase family. As to quaternary structure, homodimer. Heterotetramer of two MnmE and two MnmG subunits. K(+) is required as a cofactor.

It is found in the cytoplasm. Functionally, exhibits a very high intrinsic GTPase hydrolysis rate. Involved in the addition of a carboxymethylaminomethyl (cmnm) group at the wobble position (U34) of certain tRNAs, forming tRNA-cmnm(5)s(2)U34. The chain is tRNA modification GTPase MnmE from Shigella sonnei (strain Ss046).